The following is a 365-amino-acid chain: MAEKETPLTAVKVEALVVMKIIKHCSQTFPTTATGSIVGMDVGGTLEITNSFPFPVLEVPSESHFENAPTNPAAAAPRAKGNAAYQAEMIRMLREVNVDANNVGWYTSANMGNFVNMNVVENQFFYQKEMNERTVALVHDVSRSSQGSLSLRAFRLSPKFMTAFKENKFTSEELQKSNLRYQDIFVELPVEIHNSHLITSFIHQLQTPNIPTPTELPPSLAALESGPFVNSTILAPNYDNLTLSIDPFLEKNCDLLLDSMETHHTETNNFQYYQRSLAREQQRISAWQQKRKQENATRATLKQPLLPEDEWQRLFKLPQEPSRLDSMLNSRQVDQYARQVDSFVSATTGKMFAVKGNLLPGETTK.

Residues 11–160 (VKVEALVVMK…LRAFRLSPKF (150 aa)) enclose the MPN domain.

Belongs to the eIF-3 subunit H family. Component of the eukaryotic translation initiation factor 3 (eIF-3) complex.

It localises to the cytoplasm. In terms of biological role, component of the eukaryotic translation initiation factor 3 (eIF-3) complex, which is involved in protein synthesis of a specialized repertoire of mRNAs and, together with other initiation factors, stimulates binding of mRNA and methionyl-tRNAi to the 40S ribosome. The eIF-3 complex specifically targets and initiates translation of a subset of mRNAs involved in cell proliferation. The sequence is that of Eukaryotic translation initiation factor 3 subunit H from Aspergillus clavatus (strain ATCC 1007 / CBS 513.65 / DSM 816 / NCTC 3887 / NRRL 1 / QM 1276 / 107).